The sequence spans 480 residues: RuvB-like helicase 2 (480 aa).

Position 76–83 (76–83 (GPPSTGKT)) interacts with ATP.

It belongs to the RuvB family. In terms of assembly, may form heterododecamers with RVB1. Component of the SWR1 chromatin remodeling complex, the INO80 chromatin remodeling complex, and of the R2TP complex.

The protein localises to the nucleus. The enzyme catalyses ATP + H2O = ADP + phosphate + H(+). DNA helicase which participates in several chromatin remodeling complexes, including the SWR1 and the INO80 complexes. The SWR1 complex mediates the ATP-dependent exchange of histone H2A for the H2A variant HZT1 leading to transcriptional regulation of selected genes by chromatin remodeling. The INO80 complex remodels chromatin by shifting nucleosomes and is involved in DNA repair. Also involved in pre-rRNA processing. This Debaryomyces hansenii (strain ATCC 36239 / CBS 767 / BCRC 21394 / JCM 1990 / NBRC 0083 / IGC 2968) (Yeast) protein is RuvB-like helicase 2 (RVB2).